Here is a 391-residue protein sequence, read N- to C-terminus: Galactarate dehydratase (D-threo-forming) (391 aa).

A substrate-binding site is contributed by Arg15. Residues Asp42 and His45 each contribute to the Mg(2+) site. Tyr89 contributes to the substrate binding site. Tyr90 functions as the Proton donor in the catalytic mechanism. Tyr164 serves as the catalytic Proton acceptor. Asp193, Glu221, and His246 together coordinate Mg(2+). Thr296 serves as a coordination point for substrate. Thr297 serves as a coordination point for Mg(2+). Arg385 contacts substrate.

Belongs to the mandelate racemase/muconate lactonizing enzyme family. Mg(2+) is required as a cofactor.

The catalysed reaction is galactarate = (2S,3R)-dihydroxy-5-oxohexanedioate + H2O. In terms of biological role, catalyzes the regioselective dehydration of galactarate into 2-keto-D-threo-4,5-dihydroxyadipate ((2S,3R)-dihydroxy-5-oxohexanedioate). Is not active on other acid sugars. This is Galactarate dehydratase (D-threo-forming) from Oceanobacillus iheyensis (strain DSM 14371 / CIP 107618 / JCM 11309 / KCTC 3954 / HTE831).